We begin with the raw amino-acid sequence, 406 residues long: Probable sodium/metabolite cotransporter BASS1, chloroplastic (406 aa).

Residues 1–64 constitute a chloroplast transit peptide; it reads MPLLRRPPAA…RHLCGIPSSR (64 aa). 9 helical membrane-spanning segments follow: residues 98–118, 123–143, 152–172, 187–209, 217–237, 252–272, 278–298, 315–335, and 376–396; these read VGEV…AVAL, AFLW…MLGM, LKTA…QYSV, PSYY…SNIV, VALS…LTPL, MGLF…GALL, GLVQ…VAVL, LQVV…GYVL, and VPCA…AGIW.

This sequence belongs to the bile acid:sodium symporter (BASS) (TC 2.A.28) family.

Its subcellular location is the membrane. It localises to the plastid. It is found in the chloroplast envelope. In terms of biological role, may function as sodium-coupled metabolite transporter across the chloroplast envelope. This is Probable sodium/metabolite cotransporter BASS1, chloroplastic (BASS1) from Oryza sativa subsp. japonica (Rice).